Consider the following 96-residue polypeptide: ESAT-6-like protein EsxR (96 aa).

It belongs to the WXG100 family. ESAT-6 subfamily.

It is found in the secreted. The chain is ESAT-6-like protein EsxR from Mycobacterium bovis (strain ATCC BAA-935 / AF2122/97).